A 317-amino-acid polypeptide reads, in one-letter code: Melanocyte-stimulating hormone receptor (317 aa).

The Extracellular segment spans residues 1–37; it reads MPMHGAQRKLLGSLNSTPTATSNLGLAANHTGAPCLE. N-linked (GlcNAc...) asparagine glycosylation occurs at asparagine 29. Residues 38–63 form a helical membrane-spanning segment; sequence VSIPDGLFLSLGLVSLVENVLVVAAI. Residues 64–72 are Cytoplasmic-facing; that stretch reads AKNRNLHSS. A helical transmembrane segment spans residues 73-93; it reads MYCFICCLALSDLLVSGSNML. At 94–118 the chain is on the extracellular side; it reads ETAVILLLEAGALATRTSAMQQLHN. The helical transmembrane segment at 119 to 140 threads the bilayer; that stretch reads TIDVLTCSSMLCSLCFLGAIAV. Topologically, residues 141-163 are cytoplasmic; sequence DRYISIFYALRYHSIMTLPRAQR. A helical transmembrane segment spans residues 164–183; the sequence is AIAAIWVASXLSSTLFITYY. The Extracellular portion of the chain corresponds to 184-191; sequence DHAAVLLC. A helical transmembrane segment spans residues 192–211; sequence LVVFFLAMLVLMAVLYVHML. The Cytoplasmic portion of the chain corresponds to 212–240; it reads ARACQHAHGIIRLHKRQTPAHQGFGLRGA. A helical membrane pass occupies residues 241–266; the sequence is ATLTILLGIFFLCWGPFFLHLTLVVF. Residues 267–279 are Extracellular-facing; sequence CPQHLTCSCIFKN. A helical membrane pass occupies residues 280–300; that stretch reads FKVFLTLIICNTIIDPLIYAF. The Cytoplasmic segment spans residues 301–317; it reads RSQELRRTLKEVLLCSW. Cysteine 315 carries the S-palmitoyl cysteine lipid modification.

The protein belongs to the G-protein coupled receptor 1 family. Interacts with MGRN1, but does not undergo MGRN1-mediated ubiquitination; this interaction competes with GNAS-binding and thus inhibits agonist-induced cAMP production. Interacts with OPN3; the interaction results in a decrease in MC1R-mediated cAMP signaling and ultimately a decrease in melanin production in melanocytes.

The protein localises to the cell membrane. In terms of biological role, receptor for MSH (alpha, beta and gamma) and ACTH. The activity of this receptor is mediated by G proteins which activate adenylate cyclase. Mediates melanogenesis, the production of eumelanin (black/brown) and phaeomelanin (red/yellow), via regulation of cAMP signaling in melanocytes. This is Melanocyte-stimulating hormone receptor (MC1R) from Saguinus midas (Golden-handed tamarin).